The chain runs to 342 residues: Histidinol-phosphate aminotransferase 2 (342 aa).

Lys-206 is modified (N6-(pyridoxal phosphate)lysine).

This sequence belongs to the class-II pyridoxal-phosphate-dependent aminotransferase family. Histidinol-phosphate aminotransferase subfamily. The cofactor is pyridoxal 5'-phosphate.

The catalysed reaction is L-histidinol phosphate + 2-oxoglutarate = 3-(imidazol-4-yl)-2-oxopropyl phosphate + L-glutamate. It functions in the pathway amino-acid biosynthesis; L-histidine biosynthesis; L-histidine from 5-phospho-alpha-D-ribose 1-diphosphate: step 7/9. The polypeptide is Histidinol-phosphate aminotransferase 2 (hisC2) (Archaeoglobus fulgidus (strain ATCC 49558 / DSM 4304 / JCM 9628 / NBRC 100126 / VC-16)).